Reading from the N-terminus, the 208-residue chain is NAD(P)H-hydrate epimerase (208 aa).

Residues 10–208 form the YjeF N-terminal domain; sequence IRDAERQTLA…TLGVIMTPAN (199 aa). 54–58 contacts (6S)-NADPHX; sequence NNGGD. K(+)-binding residues include Asn55 and Asp117. Residues 121 to 127 and Asp150 contribute to the (6S)-NADPHX site; that span reads GIGLNRP. Position 153 (Ser153) interacts with K(+).

The protein belongs to the NnrE/AIBP family. Requires K(+) as cofactor.

The enzyme catalyses (6R)-NADHX = (6S)-NADHX. It carries out the reaction (6R)-NADPHX = (6S)-NADPHX. Its function is as follows. Catalyzes the epimerization of the S- and R-forms of NAD(P)HX, a damaged form of NAD(P)H that is a result of enzymatic or heat-dependent hydration. This is a prerequisite for the S-specific NAD(P)H-hydrate dehydratase to allow the repair of both epimers of NAD(P)HX. This chain is NAD(P)H-hydrate epimerase, found in Achromobacter xylosoxidans (strain A8).